The chain runs to 688 residues: Translation initiation factor IF-2 (688 aa).

Basic and acidic residues-rich tracts occupy residues 53–62 and 86–95; these read GKEKSEKTKE and KRDDKNEKVN. A disordered region spans residues 53-100; the sequence is GKEKSEKTKEEDDEIETTAKNPIKESMNNKKSNKRDDKNEKVNTENAE. The region spanning 187–354 is the tr-type G domain; sequence KRSPIITVMG…MILLSSEILE (168 aa). Positions 196 to 203 are G1; that stretch reads GHVDHGKT. Residue 196–203 coordinates GTP; that stretch reads GHVDHGKT. The tract at residues 221-225 is G2; sequence GITQH. The segment at 242 to 245 is G3; sequence DTPG. GTP-binding positions include 242-246 and 296-299; these read DTPGH and NKID. The tract at residues 296–299 is G4; the sequence is NKID. A G5 region spans residues 332 to 334; that stretch reads SAH.

Belongs to the TRAFAC class translation factor GTPase superfamily. Classic translation factor GTPase family. IF-2 subfamily.

The protein resides in the cytoplasm. In terms of biological role, one of the essential components for the initiation of protein synthesis. Protects formylmethionyl-tRNA from spontaneous hydrolysis and promotes its binding to the 30S ribosomal subunits. Also involved in the hydrolysis of GTP during the formation of the 70S ribosomal complex. This chain is Translation initiation factor IF-2, found in Clostridium botulinum (strain Loch Maree / Type A3).